Reading from the N-terminus, the 167-residue chain is uncharacterized protein (167 aa).

This sequence to A.thaliana At2g20940.

This is an uncharacterized protein from Schizosaccharomyces pombe (strain 972 / ATCC 24843) (Fission yeast).